The sequence spans 478 residues: Nuclear distribution protein PAC1 (478 aa).

The LisH domain maps to 9–41 (QAEELHKAMIAYLLSANLPKSAAALREELADSV). Positions 60-87 (TSVVRLQKKIMDLESRNNALQSELDSAT) form a coiled coil. WD repeat units follow at residues 113–154 (SHRE…RTIK), 156–196 (HTKA…KNIR), 200–247 (GHDH…CVKT), 250–289 (GHVD…TKST), 292–352 (GHEH…IKTL), 354–393 (GHDN…KCVR), 398–439 (AHGH…GASA), and 440–477 (INGV…RVFA).

This sequence belongs to the WD repeat LIS1/nudF family. As to quaternary structure, self-associates. Interacts with NDL1 and dynein.

The protein localises to the cytoplasm. Its subcellular location is the cytoskeleton. It localises to the spindle pole. Its function is as follows. Positively regulates the activity of the minus-end directed microtubule motor protein dynein. May enhance dynein-mediated microtubule sliding by targeting dynein to the microtubule plus end. Required for nuclear migration during vegetative growth as well as development. Required for retrograde early endosome (EE) transport from the hyphal tip. Required for localization of dynein to the mitotic spindle poles. Recruits additional proteins to the dynein complex at SPBs. In Paracoccidioides brasiliensis (strain Pb03), this protein is Nuclear distribution protein PAC1.